The sequence spans 637 residues: Threonine--tRNA ligase (637 aa).

In terms of domain architecture, TGS spans 1-61 (MVTVTLPDGS…DADAQLAIVT (61 aa)). The segment at 244–535 (DHRRLAKQLD…LIEHHAGNFP (292 aa)) is catalytic. Positions 335, 386, and 512 each coordinate Zn(2+).

The protein belongs to the class-II aminoacyl-tRNA synthetase family. As to quaternary structure, homodimer. The cofactor is Zn(2+).

It localises to the cytoplasm. It catalyses the reaction tRNA(Thr) + L-threonine + ATP = L-threonyl-tRNA(Thr) + AMP + diphosphate + H(+). In terms of biological role, catalyzes the attachment of threonine to tRNA(Thr) in a two-step reaction: L-threonine is first activated by ATP to form Thr-AMP and then transferred to the acceptor end of tRNA(Thr). Also edits incorrectly charged L-seryl-tRNA(Thr). The chain is Threonine--tRNA ligase from Thiobacillus denitrificans (strain ATCC 25259 / T1).